A 336-amino-acid chain; its full sequence is MEPQAKRKKEMDDYDDTWEVLPVLSDEQSQDPELLPAYAAPILERRETSRLVKELSLIHPLPNLQHIKRVRPCKHKDSPHPLEVIVCLVSDVQCTDPKKVTLSHLLHTQCFNSNGLGDPFIVQIPANPPLTRPQFEKASKHWPTSFHEDKLVTFALKGQLFTAHQKTKMREYMCVAVKAAKSGRELGMDAVGAVIVDPKTEQIIAVAHDCKRGSHPLHHAVMVCIDLVACGQDGGAYNYEKYPACRFSCSNSVCDGKETGLPYICTGYDLYVTREPCVMCAMALVHSRISRVFYGASTADGAFGSRYKIHCQKDLNHRFEVFKGVMVNACEDLCKE.

Residues 167–322 form the CMP/dCMP-type deaminase domain; the sequence is TKMREYMCVA…KDLNHRFEVF (156 aa). Positions 219, 277, and 280 each coordinate Zn(2+).

The protein belongs to the cytidine and deoxycytidylate deaminase family. ADAT3 subfamily. Zn(2+) is required as a cofactor.

This is Probable inactive tRNA-specific adenosine deaminase-like protein 3 (adat3) from Danio rerio (Zebrafish).